The primary structure comprises 294 residues: tRNA dimethylallyltransferase (294 aa).

10 to 17 (GPTAVGKT) is a binding site for ATP. 12–17 (TAVGKT) is a binding site for substrate. Residues 35–38 (DSQQ) are interaction with substrate tRNA.

It belongs to the IPP transferase family. As to quaternary structure, monomer. Mg(2+) serves as cofactor.

The enzyme catalyses adenosine(37) in tRNA + dimethylallyl diphosphate = N(6)-dimethylallyladenosine(37) in tRNA + diphosphate. Catalyzes the transfer of a dimethylallyl group onto the adenine at position 37 in tRNAs that read codons beginning with uridine, leading to the formation of N6-(dimethylallyl)adenosine (i(6)A). This is tRNA dimethylallyltransferase from Streptococcus pneumoniae (strain ATCC 700669 / Spain 23F-1).